Consider the following 81-residue polypeptide: Sulfur carrier protein TusA (81 aa).

The active-site Cysteine persulfide intermediate is the Cys19.

It belongs to the sulfur carrier protein TusA family.

The protein resides in the cytoplasm. In terms of biological role, sulfur carrier protein which probably makes part of a sulfur-relay system. In Shewanella putrefaciens (strain CN-32 / ATCC BAA-453), this protein is Sulfur carrier protein TusA.